A 133-amino-acid chain; its full sequence is Small ribosomal subunit protein uS19 (133 aa).

The protein belongs to the universal ribosomal protein uS19 family.

Functionally, protein S19 forms a complex with S13 that binds strongly to the 16S ribosomal RNA. The polypeptide is Small ribosomal subunit protein uS19 (Thermococcus gammatolerans (strain DSM 15229 / JCM 11827 / EJ3)).